The chain runs to 79 residues: Small ribosomal subunit protein uS17 (79 aa).

This sequence belongs to the universal ribosomal protein uS17 family. As to quaternary structure, part of the 30S ribosomal subunit.

In terms of biological role, one of the primary rRNA binding proteins, it binds specifically to the 5'-end of 16S ribosomal RNA. This Rhizobium leguminosarum bv. trifolii (strain WSM2304) protein is Small ribosomal subunit protein uS17.